The chain runs to 858 residues: RNA-directed RNA polymerase 2a (858 aa).

The RdRp catalytic domain occupies 511 to 624; it reads KYCLEIDLSK…FSVLPPVGDP (114 aa). The disordered stretch occupies residues 775–830; the sequence is RKKKDGIERRRNDKRRTPTSPHGGGEETETKVSQEESTGTMLQKSQRESAFKSQTI. A compositionally biased stretch (basic and acidic residues) spans 798-808; that stretch reads GGEETETKVSQ. Positions 809–818 are enriched in polar residues; that stretch reads EESTGTMLQK.

Belongs to the ssRNA positive-strand viruses RNA-directed RNA polymerase family. As to quaternary structure, interacts with replication protein 1a.

It catalyses the reaction RNA(n) + a ribonucleoside 5'-triphosphate = RNA(n+1) + diphosphate. In terms of biological role, RNA-dependent RNA polymerase which replicates the viral genome composed of 3 RNA segments, RNA1, RNA2 and RNA3. The chain is RNA-directed RNA polymerase 2a from Cucumber mosaic virus (strain Ixora) (CMV).